A 188-amino-acid polypeptide reads, in one-letter code: Succinate-acetate/proton symporter SatP (188 aa).

Residues 1 to 13 (MGNTKLANPAPLG) lie on the Cytoplasmic side of the membrane. The helical transmembrane segment at 14-34 (LMGFGMTTILLNLHNVGYFAL) threads the bilayer. A topological domain (periplasmic) is located at residue aspartate 35. Residues 36 to 56 (GIILAMGIFYGGIAQIFAGLL) traverse the membrane as a helical segment. Topologically, residues 57 to 63 (EYKKGNT) are cytoplasmic. Residues 64 to 84 (FGLTAFTSYGSFWLTLVAILL) form a helical membrane-spanning segment. Over 85-97 (MPKLGLTDAPNAQ) the chain is Periplasmic. A helical membrane pass occupies residues 98-118 (FLGVYLGLWGVFTLFMFFGTL). Residues 119–122 (KGAR) lie on the Cytoplasmic side of the membrane. A helical transmembrane segment spans residues 123–143 (VLQFVFFSLTVLFALLAIGNI). Residues 144 to 148 (AGNAA) are Periplasmic-facing. Residues 149-169 (IIHFAGWIGLICGASAIYLAM) traverse the membrane as a helical segment. Residues 170–188 (GEVLNEQFGRTVLPIGESH) are Cytoplasmic-facing.

It belongs to the acetate uptake transporter (AceTr) (TC 2.A.96) family.

It is found in the cell inner membrane. Functionally, uptake of acetate and succinate. Transport is energetically dependent on the protonmotive force. The sequence is that of Succinate-acetate/proton symporter SatP (satP) from Escherichia coli O157:H7.